A 960-amino-acid polypeptide reads, in one-letter code: Anoctamin-1 (960 aa).

Over 1–333 (MRVPEKYSTL…FGEKVGLYFA (333 aa)) the chain is Cytoplasmic. Residues 92-115 (TRSVRQDQPLPGKGSPVDAGSPEV) are disordered. Residue serine 196 is modified to Phosphoserine. A helical transmembrane segment spans residues 334–354 (WLGAYTQMLIPASIVGVIVFL). The Extracellular portion of the chain corresponds to 355–406 (YGCATVDENIPSMEMCDQRYNITMCPLCDKTCSYWKMSSACATARASHLFDN). 4 disulfides stabilise this stretch: cysteine 370/cysteine 395, cysteine 379/cysteine 836, cysteine 382/cysteine 386, and cysteine 625/cysteine 630. The chain crosses the membrane as a helical span at residues 407–427 (PATVFFSVFMALWAATFMEHW). A Ca(2+)-binding site is contributed by glutamate 425. The Cytoplasmic portion of the chain corresponds to 428–493 (KRKQMRLNYR…RDRFPAYFTN (66 aa)). Residues 494-514 (LVSIIFMIAVTFAIVLGVIIY) form a helical membrane-spanning segment. The Extracellular portion of the chain corresponds to 515–542 (RISTAAALAMNSSPSVRSNIRVTVTATA). A helical transmembrane segment spans residues 543 to 563 (VIINLVVIILLDEVYGCIARW). Residues 564-581 (LTKIEVPKTEKSFEERLT) lie on the Cytoplasmic side of the membrane. The helical transmembrane segment at 582-602 (FKAFLLKFVNSYTPIFYVAFF) threads the bilayer. The Extracellular portion of the chain corresponds to 603-631 (KGRFVGRPGDYVYIFRSFRMEECAPGGCL). Residues 632–652 (MELCIQLSIIMLGKQLIQNNL) traverse the membrane as a helical segment. Residues asparagine 651, glutamate 654, glutamate 702, glutamate 705, glutamate 734, and aspartate 738 each coordinate Ca(2+). At 653–699 (FEIGIPKMKKFIRYLKLRRQSPSDREEYVKRKQRYEVDFNLEPFAGL) the chain is on the cytoplasmic side. The next 2 membrane-spanning stretches (helical) occupy residues 700-720 (TPEYMEMIIQFGFVTLFVASF) and 721-741 (PLAPLFALLNNIIEIRLDAKK). The Cytoplasmic portion of the chain corresponds to 742–758 (FVTELRRPVAIRAKDIG). Residues 759-779 (IWYNILRGVGKLAVIINAFVI) form a helical membrane-spanning segment. The Extracellular portion of the chain corresponds to 780 to 866 (SFTSDFIPRL…FWAVLAARLA (87 aa)). Asparagine 806 carries N-linked (GlcNAc...) asparagine glycosylation. Residues 867–887 (FVIVFQNLVMFMSDFVDWVIP) form a helical membrane-spanning segment. Ca(2+) is bound by residues aspartate 883 and aspartate 888. Residues 888 to 960 (DIPKDISQQI…PSYEYHGDAL (73 aa)) are Cytoplasmic-facing. The segment at 928-960 (PRDVPCNNHSPTTHPEAGDGSPVPSYEYHGDAL) is disordered.

It belongs to the anoctamin family. As to quaternary structure, homodimer. Interacts with CFTR. Interacts with TRPV4. In terms of tissue distribution, expressed at the apical surface of the vomeronasal epithelium (at protein level). Expressed in the lateral and septal nasal glands (at protein level). Highly expressed in pulmonary bronchiole epithelial cells, pancreatic and submandibular gland acinar cells, kidney proximal tubule, all retinal cell layers, most sensory cells of dorsal root ganglia, Leydig cells and spermatocytes (at protein level). In the dorsal root ganglia, detected in small-diameter nociceptive neurons and in larger myelinated neurons (at protein level). In the dorsal root ganglia, expressed in MrgprA3-positive neurons (at protein level). In the developing brain, highly expressed in the ventricular zone and subventricular zone at 12.5 dpc and 14.5 dpc where it is detected in radial glial cells but not in neurons with expression dramatically decreased at P1 (at protein level). Highly expressed in the endometrial stroma (at protein level). In taste buds of the vallate papillae, expressed in the apical region of type I taste cells (at protein level). In the kidney, expressed in the collecting duct (at protein level). In the retina, strongly expressed in the outer and inner plexiform layers, weakly expressed in some somata in the inner nuclear layer and ganglion cell layer and not expressed in the outer nuclear layer (at protein level). Expressed in various retinal neurons including rod bipolar cells (at protein level). Expressed in eye, brain, myometrium and endometrium with higher levels in endometrium than myometrium in estrus and day 18 pregnant mice. Not detected in uterine smooth muscle cells. Expressed at high levels in the thyroid gland and gastrointestinal muscles.

The protein resides in the apical cell membrane. It localises to the presynapse. It catalyses the reaction chloride(in) = chloride(out). With respect to regulation, ATP and calmodulin are essential for its activation. Channel activity is inhibited by CFTR protein and by chloride inhibitors such as niflumic acid (NFA) and 4,4'-diisothiocyanatostilbene-2,2'-disulfonic acid (DIDS). Activated by heat with activation seen at temperatures above 44 degrees Celsius. Activated by BDNF in radial glial cells. Calcium-activated chloride channel (CaCC). Plays a role in transepithelial anion transport and smooth muscle contraction. Required for the normal functioning of the interstitial cells of Cajal (ICCs) which generate electrical pacemaker activity in gastrointestinal smooth muscles. Acts as a major contributor to basal and stimulated chloride conductance in airway epithelial cells and plays an important role in tracheal cartilage development. Required for CFTR activation by enhancing endoplasmic reticulum Ca(2+) store release and is also required for CFTR membrane expression. Required for basal and ATP-dependent mucus secretion in airways and intestine, probably by controlling exocytosis of mucus-filled granules by providing Ca(2+) to an apical signaling compartment. Contributes to airway mucus expression induced by interleukins IL3 and IL8 and by the asthma-associated protein CLCA1 and is required for expression of mucin MUC5AC. However, was shown in another study not to be required for MUC5AC expression. Plays a role in the propagation of Ca(2+) waves in Kolliker's organ in the cochlea and contributes to the refinement of auditory brainstem circuitries prior to hearing onset. In vomeronasal sensory neurons, modulates spontaneous firing patterns in the absence of stimuli as well as the firing pattern of pheromone-evoked activity. Responsible for calcium-activated chloride channel activity in type I taste cells of the vallate papillae. Acts as a heat sensor in nociceptive neurons. In dorsal root ganglion neurons, plays a role in mediating non-histaminergic Mas-related G-protein coupled receptor (MRGPR)-dependent itching, acting as a downstream effector of MRGPRs. In the developing brain, required for the Ca(2+)-dependent process extension of radial glial cells. The polypeptide is Anoctamin-1 (Ano1) (Mus musculus (Mouse)).